Reading from the N-terminus, the 461-residue chain is Mitochondrial distribution and morphology protein 12 (461 aa).

Residues 1–454 (MSLDLDWNLL…YPNYYTIDLP (454 aa)) enclose the SMP-LTD domain. Disordered stretches follow at residues 75-104 (RRRG…VHHG) and 226-301 (DASS…PSSA). 2 stretches are compositionally biased toward polar residues: residues 80–97 (RQTT…SPTD) and 272–288 (RATS…QNSP).

It belongs to the MDM12 family. Component of the ER-mitochondria encounter structure (ERMES) or MDM complex, composed of MMM1, MDM10, MDM12 and MDM34. An MMM1 homodimer associates with one molecule of MDM12 on each side in a pairwise head-to-tail manner, and the SMP-LTD domains of MMM1 and MDM12 generate a continuous hydrophobic tunnel for phospholipid trafficking.

It is found in the mitochondrion outer membrane. The protein resides in the endoplasmic reticulum membrane. Functionally, component of the ERMES/MDM complex, which serves as a molecular tether to connect the endoplasmic reticulum (ER) and mitochondria. Components of this complex are involved in the control of mitochondrial shape and protein biogenesis, and function in nonvesicular lipid trafficking between the ER and mitochondria. MDM12 is required for the interaction of the ER-resident membrane protein MMM1 and the outer mitochondrial membrane-resident beta-barrel protein MDM10. The MDM12-MMM1 subcomplex functions in the major beta-barrel assembly pathway that is responsible for biogenesis of all mitochondrial outer membrane beta-barrel proteins, and acts in a late step after the SAM complex. The MDM10-MDM12-MMM1 subcomplex further acts in the TOM40-specific pathway after the action of the MDM12-MMM1 complex. Essential for establishing and maintaining the structure of mitochondria and maintenance of mtDNA nucleoids. This chain is Mitochondrial distribution and morphology protein 12, found in Mycosarcoma maydis (Corn smut fungus).